The primary structure comprises 263 residues: MTHPQPFIAVIPARLASTRLPNKPLADLGGKPMVVRVAERAREAGAQQVLVASDAQSVLDAARDHGFEAVLTRADHPSGTDRLAEVAAAFGWRDDTVVVNVQGDEPLIDPVLVRDVASHLAAHPACAIATAAHPIHDAADVFNPNVVKVALDAQSVALYFSRAPIPWSRDAYQPHWPDVAAMPAPAFPVYRHIGLYAYRARFLRTYPSLAQAPIEQAEQLEQLRALWHGERIAVLITESAPEAGIDTPADLARVQALFQPGSK.

Belongs to the KdsB family.

The protein localises to the cytoplasm. It carries out the reaction 3-deoxy-alpha-D-manno-oct-2-ulosonate + CTP = CMP-3-deoxy-beta-D-manno-octulosonate + diphosphate. It participates in nucleotide-sugar biosynthesis; CMP-3-deoxy-D-manno-octulosonate biosynthesis; CMP-3-deoxy-D-manno-octulosonate from 3-deoxy-D-manno-octulosonate and CTP: step 1/1. The protein operates within bacterial outer membrane biogenesis; lipopolysaccharide biosynthesis. Its function is as follows. Activates KDO (a required 8-carbon sugar) for incorporation into bacterial lipopolysaccharide in Gram-negative bacteria. This Burkholderia cenocepacia (strain ATCC BAA-245 / DSM 16553 / LMG 16656 / NCTC 13227 / J2315 / CF5610) (Burkholderia cepacia (strain J2315)) protein is 3-deoxy-manno-octulosonate cytidylyltransferase.